The primary structure comprises 241 residues: 2-heptyl-1-hydroxyquinolin-4(1H)-one methyltransferase (241 aa).

The protein belongs to the methyltransferase superfamily. In terms of assembly, monomer.

It is found in the cytoplasm. The enzyme catalyses 2-heptyl-1-hydroxy-4(1H)-quinolinone + S-adenosyl-L-methionine = 2-heptyl-1-methoxy-4(1H)-quinolinone + S-adenosyl-L-homocysteine + H(+). Its function is as follows. Involved in cellular response to chemical stress and may contribute to resistance toward antimicrobial natural compounds as well as drugs. Catalyzes the methylation and detoxification of the P.aeruginosa toxin 2-heptyl-1-hydroxy-4(1H)-quinolinone (HQNO) to 2-heptyl-1-methoxy-4(1H)-quinolinone (HMOQ). This Mycobacterium bovis (strain BCG / Pasteur 1173P2) protein is 2-heptyl-1-hydroxyquinolin-4(1H)-one methyltransferase.